Here is a 457-residue protein sequence, read N- to C-terminus: tRNA modification GTPase MnmE (457 aa).

Arginine 25, glutamate 87, and arginine 126 together coordinate (6S)-5-formyl-5,6,7,8-tetrahydrofolate. Residues 223 to 377 (GISTAIIGRP…IEERINNLFF (155 aa)) form the TrmE-type G domain. Asparagine 233 contributes to the K(+) binding site. GTP contacts are provided by residues 233–238 (NVGKSS), 252–258 (TDIAGTT), and 277–280 (DTAG). Serine 237 provides a ligand contact to Mg(2+). K(+) contacts are provided by threonine 252, isoleucine 254, and threonine 257. A Mg(2+)-binding site is contributed by threonine 258. Lysine 457 lines the (6S)-5-formyl-5,6,7,8-tetrahydrofolate pocket.

Belongs to the TRAFAC class TrmE-Era-EngA-EngB-Septin-like GTPase superfamily. TrmE GTPase family. In terms of assembly, homodimer. Heterotetramer of two MnmE and two MnmG subunits. Requires K(+) as cofactor.

It is found in the cytoplasm. Exhibits a very high intrinsic GTPase hydrolysis rate. Involved in the addition of a carboxymethylaminomethyl (cmnm) group at the wobble position (U34) of certain tRNAs, forming tRNA-cmnm(5)s(2)U34. This chain is tRNA modification GTPase MnmE, found in Streptococcus pneumoniae (strain Hungary19A-6).